The sequence spans 263 residues: Troponin T, fast skeletal muscle isoforms (263 aa).

Residues 1 to 26 (MSDTEEVEHGEEEYEEEAHEAEEVHE) show a composition bias toward acidic residues. Disordered regions lie at residues 1-66 (MSDT…FDDI), 107-188 (RAER…VLAE), and 243-263 (DQAQ…GRWK). Ser2 is subject to N-acetylserine. Basic and acidic residues-rich tracts occupy residues 56–66 (PEGEKVDFDDI), 107–149 (RAER…DDLK), and 177–188 (TARETKKKVLAE). Over residues 247-263 (KHSKKAGAKGKVGGRWK) the composition is skewed to basic residues.

This sequence belongs to the troponin T family.

In terms of biological role, troponin T is the tropomyosin-binding subunit of troponin, the thin filament regulatory complex which confers calcium-sensitivity to striated muscle actomyosin ATPase activity. This Gallus gallus (Chicken) protein is Troponin T, fast skeletal muscle isoforms (TNNT3).